Consider the following 610-residue polypeptide: UvrABC system protein C (610 aa).

The 79-residue stretch at S16–V94 folds into the GIY-YIG domain. The 36-residue stretch at D204 to V239 folds into the UVR domain.

This sequence belongs to the UvrC family. As to quaternary structure, interacts with UvrB in an incision complex.

It localises to the cytoplasm. Its function is as follows. The UvrABC repair system catalyzes the recognition and processing of DNA lesions. UvrC both incises the 5' and 3' sides of the lesion. The N-terminal half is responsible for the 3' incision and the C-terminal half is responsible for the 5' incision. This is UvrABC system protein C from Salmonella enteritidis PT4 (strain P125109).